Consider the following 248-residue polypeptide: Ubiquinone biosynthesis O-methyltransferase (248 aa).

S-adenosyl-L-methionine is bound by residues Arg41, Gly72, Asp93, and Met136.

Belongs to the methyltransferase superfamily. UbiG/COQ3 family.

It carries out the reaction a 3-demethylubiquinol + S-adenosyl-L-methionine = a ubiquinol + S-adenosyl-L-homocysteine + H(+). The catalysed reaction is a 3-(all-trans-polyprenyl)benzene-1,2-diol + S-adenosyl-L-methionine = a 2-methoxy-6-(all-trans-polyprenyl)phenol + S-adenosyl-L-homocysteine + H(+). The protein operates within cofactor biosynthesis; ubiquinone biosynthesis. Functionally, O-methyltransferase that catalyzes the 2 O-methylation steps in the ubiquinone biosynthetic pathway. The chain is Ubiquinone biosynthesis O-methyltransferase from Rhizobium etli (strain ATCC 51251 / DSM 11541 / JCM 21823 / NBRC 15573 / CFN 42).